The sequence spans 754 residues: MGIKVQRPRCFFDIAINNQPAGRVVFELFSDVCPKTCENFRCLCTGEKGTGKSTQKPLHYKSCLFHRVVKDFMVQGGDFSEGNGRGGESIYGGFFEDESFAVKHNKEFLLSMANRGKDTNGSQFFITTKPTPHLDGHHVVFGQVISGQEVVREIENQKTDAASKPFAEVRILSCGELIPKSKVKKEEKKRHKSSSSSSSSSSDSDSSSDSQSSSDSSDSESATEEKSKKRKKKHRKNSRKHKKEKKKRKKSKKSASSESEAENLEAQPQSTVRPEEIPPIPENRFLMRKSPPKADEKERKNRERERERECNPPNSQPASYQRRLLVTRSGRKIKGRGPRRYRTPSRSRSRDRFRRSETPPHWRQEMQRAQRMRVSSGERWIKGDKSELNEIKENQRSPVRVKERKITDHRNVSESPNRKNEKEKKVKDHKSNSKERDIRRNSEKDDKYKNKVKKRAKSKSRSKSKEKSKSKERDSKHNRNEEKRMRSRSKGRDHENVKEKEKQSDSKGKDQERSRSKEKSKQLESKSNEHDHSKSKEKDRRAQSRSRECDITKGKHSYNSRTRERSRSRDRSRRVRSRTHDRDRSRSKEYHRYREQEYRRRGRSRSRERRTPPGRSRSKDRRRRRRDSRSSEREESQSRNKDKYRNQESKSSHRKENSESEKRMYSKSRDHNSSNNSREKKADRDQSPFSKIKQSSQDNELKSSMLKNKEDEKIRSSVEKENQKSKGQENDHVHEKNKKFDHESSPGTDEDKSG.

Residues 11-176 (FFDIAINNQP…AEVRILSCGE (166 aa)) enclose the PPIase cyclophilin-type domain. Residues 182–193 (KVKKEEKKRHKS) are compositionally biased toward basic residues. Positions 182 to 754 (KVKKEEKKRH…SPGTDEDKSG (573 aa)) are disordered. Over residues 194 to 216 (SSSSSSSSSDSDSSSDSQSSSDS) the composition is skewed to low complexity. The span at 228–253 (KKRKKKHRKNSRKHKKEKKKRKKSKK) shows a compositional bias: basic residues. Phosphoserine is present on residues S254, S256, S257, S259, and S290. Residues 292-310 (PKADEKERKNREREREREC) are compositionally biased toward basic and acidic residues. Phosphoserine is present on S315. The segment covering 329–347 (SGRKIKGRGPRRYRTPSRS) has biased composition (basic residues). Composition is skewed to basic and acidic residues over residues 348-368 (RSRD…EMQR) and 379-449 (RWIK…DKYK). S356 carries the phosphoserine modification. Phosphothreonine is present on T358. Residue S386 is modified to Phosphoserine. Residue K392 forms a Glycyl lysine isopeptide (Lys-Gly) (interchain with G-Cter in SUMO2) linkage. Phosphoserine is present on residues S397, S413, and S415. The segment covering 450 to 462 (NKVKKRAKSKSRS) has biased composition (basic residues). 2 stretches are compositionally biased toward basic and acidic residues: residues 463 to 553 (KSKE…DITK) and 578 to 599 (RTHD…QEYR). Residues 616 to 627 (SRSKDRRRRRRD) are compositionally biased toward basic residues. Residues 628-686 (SRSSEREESQSRNKDKYRNQESKSSHRKENSESEKRMYSKSRDHNSSNNSREKKADRDQ) are compositionally biased toward basic and acidic residues. Residues S687 and S690 each carry the phosphoserine modification. A compositionally biased stretch (polar residues) spans 687–698 (SPFSKIKQSSQD). Residue K693 forms a Glycyl lysine isopeptide (Lys-Gly) (interchain with G-Cter in SUMO2) linkage. A phosphoserine mark is found at S696, S744, and S745. Basic and acidic residues predominate over residues 707–754 (KNKEDEKIRSSVEKENQKSKGQENDHVHEKNKKFDHESSPGTDEDKSG). A Phosphothreonine modification is found at T748. At S753 the chain carries Phosphoserine.

As to quaternary structure, interacts with CLK1, PNN and with the phosphorylated C-terminal domain of RNA polymerase II. In terms of tissue distribution, ubiquitous.

Its subcellular location is the nucleus matrix. It is found in the nucleus speckle. The enzyme catalyses [protein]-peptidylproline (omega=180) = [protein]-peptidylproline (omega=0). Its activity is regulated as follows. Inhibited by cyclosporin A (CsA). In terms of biological role, PPIase that catalyzes the cis-trans isomerization of proline imidic peptide bonds in oligopeptides and may therefore assist protein folding. May be implicated in the folding, transport, and assembly of proteins. May play an important role in the regulation of pre-mRNA splicing. In Homo sapiens (Human), this protein is Peptidyl-prolyl cis-trans isomerase G (PPIG).